Consider the following 477-residue polypeptide: Bifunctional protein HldE (477 aa).

The ribokinase stretch occupies residues 1-318 (MKVTLPEFER…ENAVRGRADT (318 aa)). At Lys-179 the chain carries N6-acetyllysine. ATP is bound at residue 195-198 (NLSE). Asp-264 is a catalytic residue. Residues 344 to 477 (MTNGVFDILH…IKKIQQDKKG (134 aa)) are cytidylyltransferase.

It in the N-terminal section; belongs to the carbohydrate kinase PfkB family. In the C-terminal section; belongs to the cytidylyltransferase family. Homodimer.

The catalysed reaction is D-glycero-beta-D-manno-heptose 7-phosphate + ATP = D-glycero-beta-D-manno-heptose 1,7-bisphosphate + ADP + H(+). The enzyme catalyses D-glycero-beta-D-manno-heptose 1-phosphate + ATP + H(+) = ADP-D-glycero-beta-D-manno-heptose + diphosphate. The protein operates within nucleotide-sugar biosynthesis; ADP-L-glycero-beta-D-manno-heptose biosynthesis; ADP-L-glycero-beta-D-manno-heptose from D-glycero-beta-D-manno-heptose 7-phosphate: step 1/4. It participates in nucleotide-sugar biosynthesis; ADP-L-glycero-beta-D-manno-heptose biosynthesis; ADP-L-glycero-beta-D-manno-heptose from D-glycero-beta-D-manno-heptose 7-phosphate: step 3/4. Catalyzes the phosphorylation of D-glycero-D-manno-heptose 7-phosphate at the C-1 position to selectively form D-glycero-beta-D-manno-heptose-1,7-bisphosphate. In terms of biological role, catalyzes the ADP transfer from ATP to D-glycero-beta-D-manno-heptose 1-phosphate, yielding ADP-D-glycero-beta-D-manno-heptose. The polypeptide is Bifunctional protein HldE (Escherichia coli (strain 55989 / EAEC)).